The following is a 161-amino-acid chain: Epithelial membrane protein 2 (161 aa).

A run of 4 helical transmembrane segments spans residues 1–21 (MLVILAFIILFHITSAILLFI), 67–87 (TMILATILCCVGFFVFILQLF), 95–115 (FVFTAIIQLLSAFCVMTGASI), and 137–157 (FVVAWVAFPMTLLSGLMYLVL).

This sequence belongs to the PMP-22/EMP/MP20 family. Expressed in the arches, orbits, pectoral fins, vessels, pronephric renal tubules, and glomeruli.

The protein resides in the golgi apparatus membrane. Its subcellular location is the cell membrane. The protein localises to the apical cell membrane. It localises to the membrane raft. It is found in the cytoplasm. The protein resides in the nucleus. Its subcellular location is the perinuclear region. Its function is as follows. Functions as a key regulator of cell membrane composition by regulating protein surface expression. Also, plays a role in regulation of processes including cell migration, cell proliferation, cell contraction and cell adhesion. May play a role in glomerular filtration. This chain is Epithelial membrane protein 2 (emp2), found in Danio rerio (Zebrafish).